The chain runs to 469 residues: Cysteine--tRNA ligase (469 aa).

Zn(2+) is bound at residue cysteine 28. Positions 30 to 40 (CTVYDLCHIGH) match the 'HIGH' region motif. Residues cysteine 216, histidine 241, and glutamate 245 each contribute to the Zn(2+) site. A 'KMSKS' region motif is present at residues 273–277 (KMSKS). Lysine 276 lines the ATP pocket.

Belongs to the class-I aminoacyl-tRNA synthetase family. Monomer. Zn(2+) is required as a cofactor.

Its subcellular location is the cytoplasm. The enzyme catalyses tRNA(Cys) + L-cysteine + ATP = L-cysteinyl-tRNA(Cys) + AMP + diphosphate. The protein is Cysteine--tRNA ligase of Colwellia psychrerythraea (strain 34H / ATCC BAA-681) (Vibrio psychroerythus).